Reading from the N-terminus, the 548-residue chain is Membrane protein insertase YidC (548 aa).

A helical membrane pass occupies residues 6–26 (NLLVIALLFVSFMIWQAWEQD). The tract at residues 28 to 55 (NPQPQAQQTTQTTTTAAGSAADQGVPAS) is disordered. Over residues 30–50 (QPQAQQTTQTTTTAAGSAADQ) the composition is skewed to low complexity. Helical transmembrane passes span 350 to 370 (FVGN…GIMY), 420 to 440 (LGGC…YYML), 458 to 478 (LSAQ…MFFI), and 499 to 519 (PVIF…YYIV).

The protein belongs to the OXA1/ALB3/YidC family. Type 1 subfamily. In terms of assembly, interacts with the Sec translocase complex via SecD. Specifically interacts with transmembrane segments of nascent integral membrane proteins during membrane integration.

It is found in the cell inner membrane. Required for the insertion and/or proper folding and/or complex formation of integral membrane proteins into the membrane. Involved in integration of membrane proteins that insert both dependently and independently of the Sec translocase complex, as well as at least some lipoproteins. Aids folding of multispanning membrane proteins. In Escherichia coli O139:H28 (strain E24377A / ETEC), this protein is Membrane protein insertase YidC.